The following is a 347-amino-acid chain: Autoinducer 2 import system permease protein LsrC (347 aa).

The next 9 helical transmembrane spans lie at 14 to 34 (LLAI…YLSV), 39 to 59 (MVFS…MVML), 72 to 92 (GMCA…PVAC), 93 to 113 (LATL…VAWL), 115 to 135 (IPAI…MLLW), 155 to 175 (VFLG…LMAW), 213 to 233 (LNGG…GFIP), 249 to 269 (VLGG…ILGA), and 284 to 304 (IPAW…LVFD).

This sequence belongs to the binding-protein-dependent transport system permease family. AraH/RbsC subfamily. In terms of assembly, the complex is composed of two ATP-binding proteins (LsrA), two transmembrane proteins (LsrC and LsrD) and a solute-binding protein (LsrB).

Its subcellular location is the cell inner membrane. Functionally, part of the ABC transporter complex LsrABCD involved in autoinducer 2 (AI-2) import. Probably responsible for the translocation of the substrate across the membrane. This chain is Autoinducer 2 import system permease protein LsrC (lsrC), found in Salmonella paratyphi A (strain ATCC 9150 / SARB42).